Here is a 626-residue protein sequence, read N- to C-terminus: DNA mismatch repair protein MutL (626 aa).

A disordered region spans residues 377–413 (EEPQAVKQPTQLWQPSTKPIIEEPIQEEKSWDSNEEG). Over residues 383–393 (KQPTQLWQPST) the composition is skewed to polar residues.

Belongs to the DNA mismatch repair MutL/HexB family.

Its function is as follows. This protein is involved in the repair of mismatches in DNA. It is required for dam-dependent methyl-directed DNA mismatch repair. May act as a 'molecular matchmaker', a protein that promotes the formation of a stable complex between two or more DNA-binding proteins in an ATP-dependent manner without itself being part of a final effector complex. This chain is DNA mismatch repair protein MutL, found in Bacillus anthracis (strain A0248).